The sequence spans 363 residues: Thioredoxin domain-containing protein C13F5.05, mitochondrial (363 aa).

The transit peptide at 1–24 (MLFRIPTLFTLFLACFSLVSGVFG) directs the protein to the mitochondrion. The region spanning 32-141 (NTIELNSKNF…KSLQKFVSDS (110 aa)) is the Thioredoxin domain.

The protein resides in the mitochondrion. The protein is Thioredoxin domain-containing protein C13F5.05, mitochondrial of Schizosaccharomyces pombe (strain 972 / ATCC 24843) (Fission yeast).